The following is a 739-amino-acid chain: Phosphoribosylformylglycinamidine synthase subunit PurL (739 aa).

The active site involves H54. ATP is bound by residues Y57 and K96. Mg(2+) is bound at residue E98. Substrate-binding positions include 99 to 102 (SHNH) and R121. H100 (proton acceptor) is an active-site residue. D122 lines the Mg(2+) pocket. Position 245 (Q245) interacts with substrate. D273 is a Mg(2+) binding site. Residue 317–319 (ESQ) participates in substrate binding. The ATP site is built by D500 and G537. Residue N538 coordinates Mg(2+). S540 is a substrate binding site.

This sequence belongs to the FGAMS family. As to quaternary structure, monomer. Part of the FGAM synthase complex composed of 1 PurL, 1 PurQ and 2 PurS subunits.

It is found in the cytoplasm. The enzyme catalyses N(2)-formyl-N(1)-(5-phospho-beta-D-ribosyl)glycinamide + L-glutamine + ATP + H2O = 2-formamido-N(1)-(5-O-phospho-beta-D-ribosyl)acetamidine + L-glutamate + ADP + phosphate + H(+). Its pathway is purine metabolism; IMP biosynthesis via de novo pathway; 5-amino-1-(5-phospho-D-ribosyl)imidazole from N(2)-formyl-N(1)-(5-phospho-D-ribosyl)glycinamide: step 1/2. Its function is as follows. Part of the phosphoribosylformylglycinamidine synthase complex involved in the purines biosynthetic pathway. Catalyzes the ATP-dependent conversion of formylglycinamide ribonucleotide (FGAR) and glutamine to yield formylglycinamidine ribonucleotide (FGAM) and glutamate. The FGAM synthase complex is composed of three subunits. PurQ produces an ammonia molecule by converting glutamine to glutamate. PurL transfers the ammonia molecule to FGAR to form FGAM in an ATP-dependent manner. PurS interacts with PurQ and PurL and is thought to assist in the transfer of the ammonia molecule from PurQ to PurL. The chain is Phosphoribosylformylglycinamidine synthase subunit PurL from Bacillus anthracis (strain A0248).